The following is a 143-amino-acid chain: Transmembrane protein 207 (143 aa).

Residues 1–29 (MSTSSPFRVASKIVTAGCLCLPLFQRVLS) form the signal peptide. A helical membrane pass occupies residues 52–72 (IWFFLLIFLVVLLCGVVLFCL).

As to quaternary structure, interacts with WWOX.

The protein resides in the membrane. In Mus musculus (Mouse), this protein is Transmembrane protein 207.